The primary structure comprises 468 residues: tRNA modification GTPase MnmE (468 aa).

Residues arginine 29, glutamate 97, and lysine 136 each coordinate (6S)-5-formyl-5,6,7,8-tetrahydrofolate. Residues 232–390 (GFELAIVGRP…VVAHIVARME (159 aa)) enclose the TrmE-type G domain. Residue asparagine 242 coordinates K(+). Residues 242–247 (NVGKSS), 261–267 (TDLAGTT), and 286–289 (DTAG) contribute to the GTP site. Serine 246 provides a ligand contact to Mg(2+). Residues threonine 261, leucine 263, and threonine 266 each coordinate K(+). Threonine 267 is a binding site for Mg(2+). Lysine 468 serves as a coordination point for (6S)-5-formyl-5,6,7,8-tetrahydrofolate.

The protein belongs to the TRAFAC class TrmE-Era-EngA-EngB-Septin-like GTPase superfamily. TrmE GTPase family. As to quaternary structure, homodimer. Heterotetramer of two MnmE and two MnmG subunits. K(+) is required as a cofactor.

It is found in the cytoplasm. In terms of biological role, exhibits a very high intrinsic GTPase hydrolysis rate. Involved in the addition of a carboxymethylaminomethyl (cmnm) group at the wobble position (U34) of certain tRNAs, forming tRNA-cmnm(5)s(2)U34. The polypeptide is tRNA modification GTPase MnmE (Magnetococcus marinus (strain ATCC BAA-1437 / JCM 17883 / MC-1)).